We begin with the raw amino-acid sequence, 135 residues long: Small ribosomal subunit protein uS9 (135 aa).

Residues 102–115 show a composition bias toward basic and acidic residues; the sequence is PLKTEGHLSRDPRA. The tract at residues 102–135 is disordered; the sequence is PLKTEGHLSRDPRAKERRKYGLKKARKAPQFSKR. Residues 116–135 are compositionally biased toward basic residues; that stretch reads KERRKYGLKKARKAPQFSKR.

The protein belongs to the universal ribosomal protein uS9 family.

This Synechococcus sp. (strain CC9311) protein is Small ribosomal subunit protein uS9.